The following is a 167-amino-acid chain: Epithelial membrane protein 2 (167 aa).

Residues 1–21 (MLVLLAFIIAFHITSAALLFI) form a helical membrane-spanning segment. Residues Asn-44, Asn-47, and Asn-52 are each glycosylated (N-linked (GlcNAc...) asparagine). Helical transmembrane passes span 67 to 87 (TMILSTILCCIAFFIFVLQLF), 95 to 115 (FVLTSIIQLMSCLCVMIAASI), and 143 to 163 (YILAWVAFACTFISGMMYLIL).

It belongs to the PMP-22/EMP/MP20 family. In terms of assembly, interacts with PTK2; regulates PTK2 activation and localization. Interacts with ITGB3; regulates the levels of the heterodimer ITGA5-ITGB3 integrin surface expression. Interacts with P2RX7 (via C-terminus). Interacts with ITGB1; the interaction may be direct or indirect and ITGB1 has a heterodimer form. Expressed in ciliary body epithelia, sclera, cornea, and retinal pigment epithelium (at protein level). Expressed in lung and endometrial tissue; expression is particularly abundant in secretory endometrium (at protein level). Expressed in placental villous syncytiotrophoblasts and cytotrophoblasts and on the membrane of interstitial trophoblasts (at protein level).

The protein localises to the golgi apparatus membrane. It localises to the cell membrane. Its subcellular location is the apical cell membrane. The protein resides in the membrane raft. It is found in the cytoplasm. The protein localises to the nucleus. It localises to the perinuclear region. Functions as a key regulator of cell membrane composition by regulating protein surface expression. Also, plays a role in regulation of processes including cell migration, cell proliferation, cell contraction and cell adhesion. Regulates transepithelial migration of neutrophils into the alveolar lumen, potentially via mediation of cell surface expression of adhesion markers and lipid raft formation. Negatively regulates caveolae formation by reducing CAV1 expression and CAV1 amount by increasing lysosomal degradation. Facilitates surface trafficking and formation of lipid rafts bearing GPI-anchor proteins. Regulates surface expression of MHC1 and ICAM1 proteins increasing susceptibility to T-cell mediated cytotoxicity. Regulates the plasma membrane expression of the integrin heterodimers ITGA6-ITGB1, ITGA5-ITGB3 and ITGA5-ITGB1 resulting in modulation of cell-matrix adhesion. Also regulates many processes through PTK2. Regulates blood vessel endothelial cell migration and angiogenesis by regulating VEGF protein expression through PTK2 activation. Regulates cell migration and cell contraction through PTK2 and SRC activation. Regulates focal adhesion density, F-actin conformation and cell adhesion capacity through interaction with PTK2. Positively regulates cell proliferation. Plays a role during cell death and cell blebbing. Promotes angiogenesis and vasculogenesis through induction of VEGFA via a HIF1A-dependent pathway. Also plays a role in embryo implantation by regulating surface trafficking of integrin heterodimer ITGA5-ITGB3. Plays a role in placental angiogenesis and uterine natural killer cell regulation at the maternal-fetal placental interface, however not required in the maternal tissues for a viable pregnancy. Involved in the early stages of embryogenic development and cardiogenesis, potentially via regulation of epithelial-mesenchymal transition timing. May play a role in glomerular filtration. This Homo sapiens (Human) protein is Epithelial membrane protein 2 (EMP2).